A 299-amino-acid polypeptide reads, in one-letter code: Nucleoporin POM34 (299 aa).

Residues 1–39 (MKIQAGQLGLDDNDVPGPLPDTDSKPSSQSQNDTPMFKL) form a disordered region. Polar residues predominate over residues 25-34 (KPSSQSQNDT). Helical transmembrane passes span 64-84 (IMTNVIAFAFWNLLVKFIKFF) and 133-153 (LFHLLISLNILFSLWKLLSTV). S270 is modified (phosphoserine). T273 carries the post-translational modification Phosphothreonine. 2 positions are modified to phosphoserine: S292 and S294.

In terms of assembly, component of the nuclear pore complex (NPC). NPC constitutes the exclusive means of nucleocytoplasmic transport. NPCs allow the passive diffusion of ions and small molecules and the active, nuclear transport receptor-mediated bidirectional transport of macromolecules such as proteins, RNAs, ribonucleoparticles (RNPs), and ribosomal subunits across the nuclear envelope. Due to its 8-fold rotational symmetry, all subunits are present with 8 copies or multiples thereof.

It is found in the nucleus. The protein resides in the nuclear pore complex. The protein localises to the nucleus membrane. In terms of biological role, functions as a component of the nuclear pore complex (NPC). NPC components, collectively referred to as nucleoporins (NUPs), can play the role of both NPC structural components and of docking or interaction partners for transiently associated nuclear transport factors. The sequence is that of Nucleoporin POM34 (POM34) from Saccharomyces cerevisiae (strain ATCC 204508 / S288c) (Baker's yeast).